Consider the following 392-residue polypeptide: Cell division protein FtsZ (392 aa).

Residues 24 to 28 (GGGCN), 111 to 113 (GTG), Glu-142, Arg-145, and Asp-189 contribute to the GTP site.

Belongs to the FtsZ family. Homodimer. Polymerizes to form a dynamic ring structure in a strictly GTP-dependent manner. Interacts directly with several other division proteins.

The protein resides in the cytoplasm. Its function is as follows. Essential cell division protein that forms a contractile ring structure (Z ring) at the future cell division site. The regulation of the ring assembly controls the timing and the location of cell division. One of the functions of the FtsZ ring is to recruit other cell division proteins to the septum to produce a new cell wall between the dividing cells. Binds GTP and shows GTPase activity. This is Cell division protein FtsZ from Neisseria meningitidis serogroup A / serotype 4A (strain DSM 15465 / Z2491).